Consider the following 284-residue polypeptide: Large ribosomal subunit protein uL2 (284 aa).

The disordered stretch occupies residues 232–284; sequence RGTAMNPVDHPHGGGEGRHNGYIPRTPWGKVTKGLKTRDKRKSNKWIVKDRRK. Basic and acidic residues predominate over residues 240–250; sequence DHPHGGGEGRH. Over residues 264 to 284 the composition is skewed to basic residues; the sequence is KGLKTRDKRKSNKWIVKDRRK.

It belongs to the universal ribosomal protein uL2 family. Part of the 50S ribosomal subunit. Forms a bridge to the 30S subunit in the 70S ribosome.

One of the primary rRNA binding proteins. Required for association of the 30S and 50S subunits to form the 70S ribosome, for tRNA binding and peptide bond formation. It has been suggested to have peptidyltransferase activity; this is somewhat controversial. Makes several contacts with the 16S rRNA in the 70S ribosome. The protein is Large ribosomal subunit protein uL2 of Chlamydia abortus (strain DSM 27085 / S26/3) (Chlamydophila abortus).